The sequence spans 359 residues: MAP kinase-activated protein kinase 2 (359 aa).

The region spanning 20 to 281 (VTSNTVLGYG…IQDVISNKWI (262 aa)) is the Protein kinase domain. ATP-binding positions include 26–34 (LGYGINGKV) and K49. The active-site Proton acceptor is D142.

It belongs to the protein kinase superfamily. CAMK Ser/Thr protein kinase family. Phosphorylated and activated by MAP kinase.

The catalysed reaction is L-seryl-[protein] + ATP = O-phospho-L-seryl-[protein] + ADP + H(+). The enzyme catalyses L-threonyl-[protein] + ATP = O-phospho-L-threonyl-[protein] + ADP + H(+). Its physiological substrate seems to be the small heat shock protein (HSP27/HSP25). The protein is MAP kinase-activated protein kinase 2 (MAPk-Ak2) of Drosophila melanogaster (Fruit fly).